The following is a 968-amino-acid chain: Isoleucine--tRNA ligase (968 aa).

The 'HIGH' region signature appears at 68–78; sequence PYANGALHMGH. An L-isoleucyl-5'-AMP-binding site is contributed by Glu584. The 'KMSKS' region signature appears at 625–629; sequence KMSKS. ATP is bound at residue Lys628. Residues Cys938, Cys941, Cys958, and Cys961 each coordinate Zn(2+).

The protein belongs to the class-I aminoacyl-tRNA synthetase family. IleS type 1 subfamily. Monomer. The cofactor is Zn(2+).

It is found in the cytoplasm. It carries out the reaction tRNA(Ile) + L-isoleucine + ATP = L-isoleucyl-tRNA(Ile) + AMP + diphosphate. In terms of biological role, catalyzes the attachment of isoleucine to tRNA(Ile). As IleRS can inadvertently accommodate and process structurally similar amino acids such as valine, to avoid such errors it has two additional distinct tRNA(Ile)-dependent editing activities. One activity is designated as 'pretransfer' editing and involves the hydrolysis of activated Val-AMP. The other activity is designated 'posttransfer' editing and involves deacylation of mischarged Val-tRNA(Ile). The chain is Isoleucine--tRNA ligase from Synechococcus sp. (strain CC9311).